The following is a 397-amino-acid chain: Nuclear pore complex-interacting protein family member B2 (397 aa).

Residues 256-397 (NRMGHQPPPP…KLRTGHCTQA (142 aa)) are disordered. Residues 267 to 277 (QQHSITDNSLS) are compositionally biased toward polar residues. Low complexity predominate over residues 278–287 (LKTPPECLLT). Residues 382–391 (KRRRLSKLRT) are compositionally biased toward basic residues.

It belongs to the NPIP family.

It localises to the nucleus. This Homo sapiens (Human) protein is Nuclear pore complex-interacting protein family member B2.